A 145-amino-acid polypeptide reads, in one-letter code: Protein SprT-like (145 aa).

The SprT-like domain maps to 4–141 (TDYVKEVSRQ…CGNCHGKLRH (138 aa)). Position 64 (His-64) interacts with Zn(2+). Glu-65 is an active-site residue. His-68 contacts Zn(2+).

Belongs to the SprT family. It depends on Zn(2+) as a cofactor.

The protein resides in the cytoplasm. The sequence is that of Protein SprT-like from Streptococcus mutans serotype c (strain ATCC 700610 / UA159).